A 240-amino-acid polypeptide reads, in one-letter code: Probable transcriptional regulatory protein HPG27_148 (240 aa).

Belongs to the TACO1 family.

The protein localises to the cytoplasm. In Helicobacter pylori (strain G27), this protein is Probable transcriptional regulatory protein HPG27_148.